The following is a 273-amino-acid chain: Glutamate racemase (273 aa).

Substrate is bound by residues 11–12 (DS) and 43–44 (YG). Catalysis depends on Cys74, which acts as the Proton donor/acceptor. Substrate is bound at residue 75-76 (NT). Cys185 acts as the Proton donor/acceptor in catalysis. Substrate is bound at residue 186–187 (TH).

This sequence belongs to the aspartate/glutamate racemases family. As to quaternary structure, homodimer.

The catalysed reaction is L-glutamate = D-glutamate. It functions in the pathway cell wall biogenesis; peptidoglycan biosynthesis. Its function is as follows. Provides the (R)-glutamate required for cell wall biosynthesis. In Enterococcus faecalis (strain ATCC 700802 / V583), this protein is Glutamate racemase.